The primary structure comprises 193 residues: Achaete-scute homolog 2 (193 aa).

2 disordered regions span residues 1–58 (MDSR…RNER) and 128–177 (PLPR…GALS). Positions 50–102 (AAVARRNERERNRVKLVNLGFQALRQHVPHGGASKKLSKVETLRSAVEYIRAL) constitute a bHLH domain. Low complexity predominate over residues 128–152 (PLPRAPSGTPATAASPSCASSSPGR).

As to quaternary structure, efficient DNA binding requires dimerization with another basic helix-loop-helix (bHLH) protein. Forms heterodimers with bHLH transcription factor TCF3. May not heterodimerise with bHLH protein HAND1. In terms of tissue distribution, expressed in placenta.

Its subcellular location is the nucleus. In terms of biological role, transcription factor. Binds to E-box motifs 5'-CANNTG-3' in the regulatory elements of target genes, probably as a heterodimer with another basic helix-loop-helix (bHLH) protein such as the transcription factor TCF3. May bind both open and closed chromatin, acting as a pioneer transcription factor to allow other factors to bind and activate lineage-specific genes. Required during post-implantation development for the generation of some differentiated trophoblast cell types. Transcriptional activity of ASCL2 may be antagonised in a subset of trophoblast cells by bHLH transcription factor HAND1, perhaps by competing for dimerization with other bHLH proteins. Involved in differentiation and function of follicular T-helper (Tfh) cells, thereby playing a role in germinal center responses; probably modulates expression of genes involved in Tfh cell function, such as BCL6. May also act as a suppressor of Th1-, Th2- and Th17-cell differentiation. Induces the formation of stem cells in intestinal crypts in vitro, synergistically activating transcription of target genes, such as SOX9, together with TCF4/beta-catenin. May form a bistable transcriptional switch, controlling expression of its own gene together with Wnt/R-spondin signaling, and thereby maintaining stem cell characteristics. Modulates expression of target genes, including perhaps down-regulating EGR1/Krox24 and chemokine CXCL10/Mob-1 and up-regulating CXCR4 and CDKN1C/p57kip2, in Schwann cells. May play a role in reducing proliferation of Schwann cells, perhaps acting via modulation of expression of CDKN1C. May be dispensable for blastocyst formation and later embryonic function. May be involved in the determination of neuronal precursors. The chain is Achaete-scute homolog 2 (ASCL2) from Bos taurus (Bovine).